Reading from the N-terminus, the 151-residue chain is SsrA-binding protein (151 aa).

The tract at residues 121–151 (GKKLHDKRDTEKDREWQREKQRVMKNQRGAA) is disordered. Basic and acidic residues predominate over residues 126-142 (DKRDTEKDREWQREKQR).

Belongs to the SmpB family.

It is found in the cytoplasm. Its function is as follows. Required for rescue of stalled ribosomes mediated by trans-translation. Binds to transfer-messenger RNA (tmRNA), required for stable association of tmRNA with ribosomes. tmRNA and SmpB together mimic tRNA shape, replacing the anticodon stem-loop with SmpB. tmRNA is encoded by the ssrA gene; the 2 termini fold to resemble tRNA(Ala) and it encodes a 'tag peptide', a short internal open reading frame. During trans-translation Ala-aminoacylated tmRNA acts like a tRNA, entering the A-site of stalled ribosomes, displacing the stalled mRNA. The ribosome then switches to translate the ORF on the tmRNA; the nascent peptide is terminated with the 'tag peptide' encoded by the tmRNA and targeted for degradation. The ribosome is freed to recommence translation, which seems to be the essential function of trans-translation. This Chromobacterium violaceum (strain ATCC 12472 / DSM 30191 / JCM 1249 / CCUG 213 / NBRC 12614 / NCIMB 9131 / NCTC 9757 / MK) protein is SsrA-binding protein.